We begin with the raw amino-acid sequence, 210 residues long: RNA binding protein, mRNA processing factor 2 (210 aa).

Basic and acidic residues predominate over residues 1–10 (MSNLKPDVEH). The tract at residues 1–25 (MSNLKPDVEHCTGAGTGTGTGPSGP) is disordered. The residue at position 2 (Ser2) is an N-acetylserine. Residues 31–108 (RTLFVSGLPV…QTLRLEFAKA (78 aa)) enclose the RRM domain. Residues 41–51 (DIKPRELYLLF) are important for homodimerization.

Homodimer. Interacts with EEF2.

Its subcellular location is the cytoplasm. It localises to the nucleus. The protein localises to the stress granule. RNA-binding protein involved in the regulation of smooth muscle cell differentiation and proliferation in the gastrointestinal system. Binds NOG mRNA, the major inhibitor of the bone morphogenetic protein (BMP) pathway. Mediates an increase of NOG mRNA levels, thereby contributing to the negative regulation of BMP signaling pathway and promoting reversible dedifferentiation and proliferation of smooth muscle cells. Acts as a pre-mRNA alternative splicing regulator. Mediates ACTN1 and FLNB alternative splicing. Likely binds to mRNA tandem CAC trinucleotide or CA dinucleotide motifs. The chain is RNA binding protein, mRNA processing factor 2 (Rbpms2) from Rattus norvegicus (Rat).